Consider the following 512-residue polypeptide: Putative aldehyde-dehydrogenase-like protein y4uC (512 aa).

Residues Met-14 to Asn-41 are disordered. Gly-266–Gly-271 contacts NADP(+). Catalysis depends on residues Glu-286 and Cys-320.

It belongs to the aldehyde dehydrogenase family.

It participates in amino-acid degradation; 4-aminobutanoate degradation. Functionally, could be a succinate-semialdehyde dehydrogenase (NADP(+)). In Sinorhizobium fredii (strain NBRC 101917 / NGR234), this protein is Putative aldehyde-dehydrogenase-like protein y4uC.